The sequence spans 467 residues: Peroxisome proliferator-activated receptor alpha (467 aa).

The segment at residues 99–173 (NIECRICGDK…VGMSHNAIRF (75 aa)) is a DNA-binding region (nuclear receptor). NR C4-type zinc fingers lie at residues 102–122 (CRICGDKASGYHYGVHACEGC) and 139–161 (CDRSCKIQKKNRNKCQYCRFHKC). Positions 239-466 (FVIHDMETLC…PLLQEIYRDM (228 aa)) constitute an NR LBD domain. Positions 304–433 (DQVTLLKYGV…PKLLQKLADL (130 aa)) are required for heterodimerization with RXRA.

This sequence belongs to the nuclear hormone receptor family. NR1 subfamily. As to quaternary structure, heterodimer; with RXRA. This heterodimerization is required for DNA binding and transactivation activity. Interacts with NCOA3 coactivator. Interacts with CITED2; the interaction stimulates its transcriptional activity. Also interacts with PPARBP in vitro. Interacts with AKAP13, LPIN1, PRDM16 and coactivator NCOA6. Interacts with ASXL1 and ASXL2. Interacts with PER2. Interacts with SIRT1; the interaction seems to be modulated by NAD(+) levels. Interacts with CRY1 and CRY2. In hepatocytes, interacts with PAQR3 and HUWE1; the interactions promote PPARA poylubiquitination and HUWE1-mediated degradation. In terms of processing, ubiquitinated by E3 ubiquitin-protein ligase HUWE1; leading to proteasomal degradation. Post-translationally, phosphorylated.

Its subcellular location is the nucleus. Its function is as follows. Ligand-activated transcription factor. Key regulator of lipid metabolism. Activated by the endogenous ligand 1-palmitoyl-2-oleoyl-sn-glycerol-3-phosphocholine (16:0/18:1-GPC). Activated by oleylethanolamide, a naturally occurring lipid that regulates satiety. Receptor for peroxisome proliferators such as hypolipidemic drugs and fatty acids. Regulates the peroxisomal beta-oxidation pathway of fatty acids. Functions as a transcription activator for the ACOX1 and P450 genes. Transactivation activity requires heterodimerization with RXRA and is antagonized by NR2C2. May be required for the propagation of clock information to metabolic pathways regulated by PER2. The protein is Peroxisome proliferator-activated receptor alpha (PPARA) of Cavia porcellus (Guinea pig).